The sequence spans 1104 residues: Extended synaptotagmin-1 (1104 aa).

An N-acetylmethionine modification is found at methionine 1. Topologically, residues 1–38 (MERSPGEGPSPSPTDQPSAPSDPTGQPPAAHAKPDPGS) are cytoplasmic. The segment at 1-47 (MERSPGEGPSPSPTDQPSAPSDPTGQPPAAHAKPDPGSGGQPAGPGA) is disordered. The span at 15–24 (DQPSAPSDPT) shows a compositional bias: polar residues. A compositionally biased stretch (gly residues) spans 37–47 (GSGGQPAGPGA). Residues 39-59 (GGQPAGPGAAGEALAVLTSFG) form a helical membrane-spanning segment. Over 60-62 (KRL) the chain is Lumenal. A helical transmembrane segment spans residues 63–83 (LVLIPVYLAGAVGLSVGFVLF). Residues 84-1104 (GLALYLGWRR…LMDDKDKGSS (1021 aa)) lie on the Cytoplasmic side of the membrane. Residues 91 to 116 (WRRVRDEKERSLRAARQLLDDEEQLT) adopt a coiled-coil conformation. An SMP-LTD domain is found at 135-313 (DVEKAEWLNK…LPNRLLVPLV (179 aa)). 4 consecutive C2 domains span residues 312 to 433 (LVPD…DDWF), 460 to 580 (QVLQ…QLSS), 627 to 751 (SVDA…DEWL), and 777 to 899 (LEEV…TLNS). At serine 324 the chain carries Phosphoserine; by CDK5. Lysine 344, aspartate 345, aspartate 357, aspartate 404, aspartate 406, aspartate 408, aspartate 410, and aspartate 411 together coordinate Ca(2+). Disordered stretches follow at residues 617 to 641 (VDSE…TPDS), 813 to 833 (RKGT…TSHK), and 924 to 950 (SHSY…VTSS). Lysine 817 bears the N6-acetyllysine mark. Phosphoserine is present on residues serine 820 and serine 941. The span at 925–946 (HSYSHSSSSLSEEPELSGGPPH) shows a compositional bias: low complexity. Phosphothreonine is present on threonine 948. Phosphoserine occurs at positions 949 and 963. The C2 5 domain occupies 971-1093 (PLGQVKLTVW…DLSQGVARWY (123 aa)). Tyrosine 1009 carries the post-translational modification Phosphotyrosine. The interval 1018-1025 (KNRGTKRK) is required for phosphatidylinositol 4,5-bisphosphate-dependent location at the cell membrane. Position 1034 is a phosphoserine (serine 1034).

This sequence belongs to the extended synaptotagmin family. As to quaternary structure, interacts with ESYT2 and ESYT3. Interacts with ADGRD1; inhibiting the G-protein-coupled receptor activity of ADGRD1. Interaction with ADGRD1 is abolished when cytosolic calcium increases, relieving ADGRD1 G-protein-coupled receptor activity. Interacts (phosphorylated form) with SLC2A4. Post-translationally, phosphorylated on Ser residues in insulin-treated adipocytes (in vitro); this promotes interaction with SLC2A4.

It is found in the endoplasmic reticulum membrane. It localises to the cell membrane. In terms of biological role, binds calcium (via the C2 domains) and translocates to sites of contact between the endoplasmic reticulum and the cell membrane in response to increased cytosolic calcium levels. Helps tether the endoplasmic reticulum to the cell membrane and promotes the formation of appositions between the endoplasmic reticulum and the cell membrane. Acts as an inhibitor of ADGRD1 G-protein-coupled receptor activity in absence of cytosolic calcium. Binds glycerophospholipids in a barrel-like domain and may play a role in cellular lipid transport. The chain is Extended synaptotagmin-1 (ESYT1) from Pongo abelii (Sumatran orangutan).